A 369-amino-acid chain; its full sequence is tRNA pseudouridine synthase D (369 aa).

Aspartate 80 (nucleophile) is an active-site residue. The region spanning glycine 156–leucine 318 is the TRUD domain.

Belongs to the pseudouridine synthase TruD family.

It carries out the reaction uridine(13) in tRNA = pseudouridine(13) in tRNA. In terms of biological role, responsible for synthesis of pseudouridine from uracil-13 in transfer RNAs. The chain is tRNA pseudouridine synthase D from Xanthomonas oryzae pv. oryzae (strain KACC10331 / KXO85).